The following is a 474-amino-acid chain: Probable phenylalanine--tRNA ligase alpha subunit (474 aa).

The contains the major tRNA-Phe binding sites stretch occupies residues 1 to 150 (MSLSQKILEL…KRKLIYQAKE (150 aa)). L-phenylalanine-binding positions include Thr308, 350 to 352 (QVE), and Tyr390. Position 392 (Glu392) interacts with Mg(2+). Phe416 lines the L-phenylalanine pocket.

Belongs to the class-II aminoacyl-tRNA synthetase family. Phe-tRNA synthetase alpha subunit type 2 subfamily. Tetramer of two alpha and two beta subunits. The cofactor is Mg(2+).

It is found in the cytoplasm. It carries out the reaction tRNA(Phe) + L-phenylalanine + ATP = L-phenylalanyl-tRNA(Phe) + AMP + diphosphate + H(+). In Vairimorpha ceranae (strain BRL01) (Microsporidian parasite), this protein is Probable phenylalanine--tRNA ligase alpha subunit.